A 288-amino-acid polypeptide reads, in one-letter code: B3 domain-containing protein At2g35310 (288 aa).

2 consecutive DNA-binding regions (TF-B3) follow at residues 19–114 and 196–288; these read FFKV…FMQD and AEFS…VSKP.

Its subcellular location is the nucleus. In Arabidopsis thaliana (Mouse-ear cress), this protein is B3 domain-containing protein At2g35310.